A 411-amino-acid polypeptide reads, in one-letter code: O-glucosyltransferase rumi (411 aa).

The first 20 residues, 1–20 (MLINHLIVVLLISLVGTGGA), serve as a signal peptide directing secretion. 4 disulfide bridges follow: C64–C75, C73–C378, C120–C126, and C282–C305. D151 serves as the catalytic Proton donor/acceptor. The interval 192 to 197 (ATKLHP) is interaction with the consensus sequence C-X-S-X-[PA]-C in peptide substrates. Residues 229–233 (RGSRT), R237, 276–278 (VSF), and 294–298 (AASFR) each bind UDP-alpha-D-glucose. The Prevents secretion from ER signature appears at 408–411 (KDEL).

This sequence belongs to the glycosyltransferase 90 family.

The protein resides in the endoplasmic reticulum lumen. The protein operates within protein modification; protein glycosylation. Its function is as follows. Protein O-glucosyltransferase. Catalyzes the reaction that attaches glucose through an O-glycosidic linkage to a conserved serine residue found in the consensus sequence C-X-S-X-[PA]-C in epidermal growth factor-like repeats. Regulates Notch signaling by glucosylating Notch in the ER, glucosylation is required for the correct folding and cleavage of Notch. This Drosophila melanogaster (Fruit fly) protein is O-glucosyltransferase rumi.